A 471-amino-acid polypeptide reads, in one-letter code: Trigger factor (471 aa).

The region spanning 169 to 264 is the PPIase FKBP-type domain; the sequence is GDVAVVDFKG…LKEIKEKELP (96 aa).

Belongs to the FKBP-type PPIase family. Tig subfamily.

Its subcellular location is the cytoplasm. It catalyses the reaction [protein]-peptidylproline (omega=180) = [protein]-peptidylproline (omega=0). In terms of biological role, involved in protein export. Acts as a chaperone by maintaining the newly synthesized protein in an open conformation. Functions as a peptidyl-prolyl cis-trans isomerase. The protein is Trigger factor of Nostoc sp. (strain PCC 7120 / SAG 25.82 / UTEX 2576).